Here is a 393-residue protein sequence, read N- to C-terminus: Argininosuccinate synthase (393 aa).

ATP contacts are provided by residues 10 to 18 (AYSGGLDTS) and Ala-37. L-citrulline is bound at residue Tyr-88. Residue Gly-118 participates in ATP binding. Thr-120, Asn-124, and Asp-125 together coordinate L-aspartate. Asn-124 is a binding site for L-citrulline. Positions 128, 176, 185, 261, and 273 each coordinate L-citrulline.

The protein belongs to the argininosuccinate synthase family. Type 1 subfamily. As to quaternary structure, homotetramer.

It is found in the cytoplasm. The enzyme catalyses L-citrulline + L-aspartate + ATP = 2-(N(omega)-L-arginino)succinate + AMP + diphosphate + H(+). Its pathway is amino-acid biosynthesis; L-arginine biosynthesis; L-arginine from L-ornithine and carbamoyl phosphate: step 2/3. The polypeptide is Argininosuccinate synthase (Carsonella ruddii (strain PV)).